Reading from the N-terminus, the 227-residue chain is Cytidylate kinase (227 aa).

Glycine 12–threonine 20 contributes to the ATP binding site.

Belongs to the cytidylate kinase family. Type 1 subfamily.

It localises to the cytoplasm. It catalyses the reaction CMP + ATP = CDP + ADP. The catalysed reaction is dCMP + ATP = dCDP + ADP. The protein is Cytidylate kinase of Shigella flexneri.